Here is an 80-residue protein sequence, read N- to C-terminus: Acyl carrier protein (80 aa).

Residues glutamate 4–glutamine 79 form the Carrier domain. Serine 39 bears the O-(pantetheine 4'-phosphoryl)serine mark.

This sequence belongs to the acyl carrier protein (ACP) family. Post-translationally, 4'-phosphopantetheine is transferred from CoA to a specific serine of apo-ACP by AcpS. This modification is essential for activity because fatty acids are bound in thioester linkage to the sulfhydryl of the prosthetic group.

It is found in the cytoplasm. It participates in lipid metabolism; fatty acid biosynthesis. Carrier of the growing fatty acid chain in fatty acid biosynthesis. The sequence is that of Acyl carrier protein from Lactobacillus acidophilus (strain ATCC 700396 / NCK56 / N2 / NCFM).